Consider the following 115-residue polypeptide: NADH-ubiquinone oxidoreductase chain 3 (115 aa).

A run of 3 helical transmembrane segments spans residues 4 to 24 (FIVMMINIILSMSLIIIAFWL), 55 to 75 (FFLVAITFLLFDLEIALLLPL), and 86 to 106 (ITMLTAFILVTVLALGLAYEW).

Belongs to the complex I subunit 3 family. In terms of assembly, core subunit of respiratory chain NADH dehydrogenase (Complex I) which is composed of 45 different subunits. Interacts with TMEM186. Interacts with TMEM242.

It is found in the mitochondrion inner membrane. It catalyses the reaction a ubiquinone + NADH + 5 H(+)(in) = a ubiquinol + NAD(+) + 4 H(+)(out). Core subunit of the mitochondrial membrane respiratory chain NADH dehydrogenase (Complex I) which catalyzes electron transfer from NADH through the respiratory chain, using ubiquinone as an electron acceptor. Essential for the catalytic activity of complex I. This is NADH-ubiquinone oxidoreductase chain 3 from Reithrodontomys fulvescens (Fulvous harvest mouse).